A 220-amino-acid polypeptide reads, in one-letter code: Probable acrEF/envCD operon repressor (220 aa).

In terms of domain architecture, HTH tetR-type spans 10–70; it reads LKTRQELIET…EMWLQQPSLR (61 aa). The segment at residues 33-52 is a DNA-binding region (H-T-H motif); that stretch reads TLNDIADAANVTRGAIYWHF.

In terms of biological role, potential regulator protein for the acrEF/envCD genes. The sequence is that of Probable acrEF/envCD operon repressor (envR) from Escherichia coli O157:H7.